The sequence spans 122 residues: Urocortin (122 aa).

A signal peptide spans 1–25 (MIQRGRATLLVALLLLAQLRPESSQ). A propeptide spanning residues 26–80 (WSPAAAAATGVQDPNLRWSPGVRNQGGGVRALLLLLAERFPRRAGSEPAGERQRR) is cleaved from the precursor. V120 bears the Valine amide mark.

It belongs to the sauvagine/corticotropin-releasing factor/urotensin I family. As to quaternary structure, interacts with CRHR1 and CRHR2 (via their N-terminal extracellular domain). As to expression, in the organ of Corti, detected in the inner hair cell region (at protein level). Expressed in skin (at protein level).

The protein localises to the secreted. Its function is as follows. Acts in vitro to stimulate the secretion of adrenocorticotropic hormone (ACTH). Binds with high affinity to CRF receptor types 1, 2-alpha, and 2-beta. Plays a role in the establishment of normal hearing thresholds. Reduces food intake and regulates ghrelin levels in gastric body and plasma. This chain is Urocortin (Ucn), found in Mus musculus (Mouse).